We begin with the raw amino-acid sequence, 84 residues long: Large ribosomal subunit protein bL27 (84 aa).

The interval 1–20 (MAHKKGGGSTKNGRDSNPKY) is disordered.

This sequence belongs to the bacterial ribosomal protein bL27 family.

This chain is Large ribosomal subunit protein bL27 (rpmA), found in Prosthecochloris vibrioformis (Chlorobium vibrioforme).